The chain runs to 794 residues: Protein smoothened (794 aa).

Positions G1–G15 are cleaved as a signal peptide. The Extracellular portion of the chain corresponds to P16–H201. N25 is a glycosylation site (N-linked (GlcNAc...) asparagine). Intrachain disulfides connect C34/C148, C40/C104, C48/C97, C88/C124, and C117/C139. In terms of domain architecture, FZ spans R35–E151. Cholesterol is bound at residue D65. The N-linked (GlcNAc...) asparagine glycan is linked to N158. 2 disulfides stabilise this stretch: C163-C183 and C187-C264. The helical transmembrane segment at V202–V222 threads the bilayer. The Cytoplasmic segment spans residues A223–Y231. Residues P232 to A252 traverse the membrane as a helical segment. At Q253–C283 the chain is on the extracellular side. N278 carries an N-linked (GlcNAc...) asparagine glycan. Cysteines 283 and 359 form a disulfide. A helical transmembrane segment spans residues V284–L304. Over T305–S327 the chain is Cytoplasmic. Residues Y328–A348 form a helical membrane-spanning segment. Over Q349–G371 the chain is Extracellular. Y363 is a cholesterol binding site. Residues F372 to V392 traverse the membrane as a helical segment. Topologically, residues M393–R420 are cytoplasmic. The helical transmembrane segment at L421–F440 threads the bilayer. Topologically, residues Y441–A493 are extracellular. The cysteines at positions 459 and 476 are disulfide-linked. N462 carries N-linked (GlcNAc...) asparagine glycosylation. Residues M494–W514 traverse the membrane as a helical segment. Topologically, residues K515 to F794 are cytoplasmic. Disordered stretches follow at residues L634–R655 and P723–L773. Positions R637 to K647 are enriched in basic residues.

It belongs to the G-protein coupled receptor Fz/Smo family. Homodimer.

It localises to the cell membrane. It is found in the cell projection. The protein resides in the cilium. G protein-coupled receptor which associates with the patched protein (PTCH) to transduce hedgehog protein signaling. Binding of sonic hedgehog (SHH) to its receptor patched prevents inhibition of smoothened (SMO) by patched. When active, SMO binds to and sequesters protein kinase A catalytic subunit PRKACA at the cell membrane, preventing PRKACA-mediated phosphorylation of GLI transcription factors which releases the GLI proteins from PRKACA-mediated inhibition and allows for transcriptional activation of hedgehog pathway target genes. The polypeptide is Protein smoothened (SMO) (Gallus gallus (Chicken)).